A 295-amino-acid chain; its full sequence is MLEKIQILLQYLLPKYWITYLVGLGASWKGGWITRYAILLFIHIYKIDMKESDKPNLTDYATFNAFFTRKLHKNARPIDTNPSTLIIPADGIITQIGKINQTNIFRVKNAPYHLDGLLAGHDNIIDYFINGSFVIIYIPPQNCHRIYMPCTGTLREVLYIPGNLFSVHPKITKNMPNIFSRNERVICLFETDFGYMAQILIGAIIVGSIETTWLGTITPPREGIVRHWRYSSNNTNTDADDSIILQKGHEMGLFKLGSTVINLFGDKKVILNNLLQPYDIARIGMPLAHGHSQKK.

Catalysis depends on charge relay system; for autoendoproteolytic cleavage activity residues Asp-90 and Ser-258. The active-site Schiff-base intermediate with substrate; via pyruvic acid; for decarboxylase activity is Ser-258. Ser-258 is subject to Pyruvic acid (Ser); by autocatalysis.

It belongs to the phosphatidylserine decarboxylase family. PSD-B subfamily. Prokaryotic type I sub-subfamily. Heterodimer of a large membrane-associated beta subunit and a small pyruvoyl-containing alpha subunit. Requires pyruvate as cofactor. Is synthesized initially as an inactive proenzyme. Formation of the active enzyme involves a self-maturation process in which the active site pyruvoyl group is generated from an internal serine residue via an autocatalytic post-translational modification. Two non-identical subunits are generated from the proenzyme in this reaction, and the pyruvate is formed at the N-terminus of the alpha chain, which is derived from the carboxyl end of the proenzyme. The autoendoproteolytic cleavage occurs by a canonical serine protease mechanism, in which the side chain hydroxyl group of the serine supplies its oxygen atom to form the C-terminus of the beta chain, while the remainder of the serine residue undergoes an oxidative deamination to produce ammonia and the pyruvoyl prosthetic group on the alpha chain. During this reaction, the Ser that is part of the protease active site of the proenzyme becomes the pyruvoyl prosthetic group, which constitutes an essential element of the active site of the mature decarboxylase.

The protein resides in the cell membrane. It catalyses the reaction a 1,2-diacyl-sn-glycero-3-phospho-L-serine + H(+) = a 1,2-diacyl-sn-glycero-3-phosphoethanolamine + CO2. It functions in the pathway phospholipid metabolism; phosphatidylethanolamine biosynthesis; phosphatidylethanolamine from CDP-diacylglycerol: step 2/2. Catalyzes the formation of phosphatidylethanolamine (PtdEtn) from phosphatidylserine (PtdSer). This is Phosphatidylserine decarboxylase proenzyme from Blochmanniella pennsylvanica (strain BPEN).